The chain runs to 116 residues: Protein MGF 110-2L (116 aa).

A signal peptide spans Met-1 to Ser-19.

It belongs to the asfivirus MGF 110 family.

Plays a role in virus cell tropism, and may be required for efficient virus replication in macrophages. The sequence is that of Protein MGF 110-2L from Ornithodoros (relapsing fever ticks).